We begin with the raw amino-acid sequence, 279 residues long: Ribonuclease Z (279 aa).

Positions 61, 63, 65, 66, 153, 176, and 240 each coordinate Zn(2+). The active-site Proton acceptor is D65.

This sequence belongs to the RNase Z family. Homodimer. The cofactor is Zn(2+).

The enzyme catalyses Endonucleolytic cleavage of RNA, removing extra 3' nucleotides from tRNA precursor, generating 3' termini of tRNAs. A 3'-hydroxy group is left at the tRNA terminus and a 5'-phosphoryl group is left at the trailer molecule.. Functionally, zinc phosphodiesterase, which displays some tRNA 3'-processing endonuclease activity. Probably involved in tRNA maturation, by removing a 3'-trailer from precursor tRNA. The chain is Ribonuclease Z from Mycobacterium marinum (strain ATCC BAA-535 / M).